Here is a 288-residue protein sequence, read N- to C-terminus: N-glycosylase/DNA lyase (288 aa).

8-oxoguanine-binding residues include Gln35, Ser62, and Trp73. The interval 134-203 is helix-hairpin-helix; it reads NPLVLVERPS…VACASISSEM (70 aa). Lys160 serves as the catalytic Schiff-base intermediate with DNA. 8-oxoguanine contacts are provided by Phe164 and Pro189. Residue Asp191 is part of the active site. Asp238 and Trp242 together coordinate 8-oxoguanine.

It belongs to the archaeal N-glycosylase/DNA lyase (AGOG) family.

It catalyses the reaction 2'-deoxyribonucleotide-(2'-deoxyribose 5'-phosphate)-2'-deoxyribonucleotide-DNA = a 3'-end 2'-deoxyribonucleotide-(2,3-dehydro-2,3-deoxyribose 5'-phosphate)-DNA + a 5'-end 5'-phospho-2'-deoxyribonucleoside-DNA + H(+). DNA repair enzyme that is part of the base excision repair (BER) pathway; protects from oxidative damage by removing the major product of DNA oxidation, 8-oxoguanine (GO), from single- and double-stranded DNA substrates. The polypeptide is N-glycosylase/DNA lyase (Aeropyrum pernix (strain ATCC 700893 / DSM 11879 / JCM 9820 / NBRC 100138 / K1)).